The sequence spans 210 residues: Fimbriae Z protein (210 aa).

One can recognise a Response regulatory domain in the interval 5-121 (SVIIMDEHPI…DIYNAVKMIL (117 aa)). Asp56 bears the 4-aspartylphosphate mark. One can recognise an HTH luxR-type domain in the interval 143 to 208 (GGHHDMPLSN…ELIDYAKSHE (66 aa)). Positions 167-186 (NKEIAEQLLLSNKTISAHKA) form a DNA-binding region, H-T-H motif.

The protein localises to the cytoplasm. In Salmonella typhimurium (strain LT2 / SGSC1412 / ATCC 700720), this protein is Fimbriae Z protein (fimZ).